A 141-amino-acid polypeptide reads, in one-letter code: Thioredoxin-like protein SkfH (141 aa).

A Thioredoxin domain is found at lysine 2–leucine 141. A disulfide bridge links cysteine 41 with cysteine 44.

In terms of biological role, required for production of the bacteriocin SkfA. The chain is Thioredoxin-like protein SkfH from Bacillus subtilis (strain 168).